The following is a 413-amino-acid chain: Exodeoxyribonuclease I (413 aa).

The region spanning 12–193 (LFYDYETFGI…VSDVYATIEI (182 aa)) is the Exonuclease domain. Residues aspartate 15, glutamate 17, and aspartate 186 each coordinate Mg(2+). Glutamate 17 contributes to the substrate binding site. Residues 202 to 349 (PRLFDFFFKI…QNIKIIFSKN (148 aa)) form the ExoI SH3-like domain. One can recognise an ExoI C-terminal domain in the interval 350–413 (NNTNQFFNVD…RYRARNFFIH (64 aa)).

In terms of assembly, monomer. Interacts with ssb (via C-terminus); this interaction stimulates the exonuclease activity by recruiting the enzyme to its substrate. It depends on Mg(2+) as a cofactor.

The catalysed reaction is Exonucleolytic cleavage in the 3'- to 5'-direction to yield nucleoside 5'-phosphates.. In terms of biological role, degrades single-stranded DNA (ssDNA) in a highly processive manner. Also functions as a DNA deoxyribophosphodiesterase that releases deoxyribose-phosphate moieties following the cleavage of DNA at an apurinic/apyrimidinic (AP) site by either an AP endonuclease or AP lyase. This Buchnera aphidicola subsp. Acyrthosiphon pisum (strain APS) (Acyrthosiphon pisum symbiotic bacterium) protein is Exodeoxyribonuclease I (sbcB).